The following is a 308-amino-acid chain: D-alanine--D-alanine ligase (308 aa).

Residues 104–301 (KQIWQGSDLP…FDELCVAILE (198 aa)) enclose the ATP-grasp domain. Residue 130–185 (IAELGLPVIIKPVHEGSSVGMSKVEKAEDFAAAIEKATQHDAVVMAEKWITGREFT) coordinates ATP. Mg(2+) is bound by residues Asp255, Glu268, and Asn270.

Belongs to the D-alanine--D-alanine ligase family. Mg(2+) is required as a cofactor. It depends on Mn(2+) as a cofactor.

Its subcellular location is the cytoplasm. The catalysed reaction is 2 D-alanine + ATP = D-alanyl-D-alanine + ADP + phosphate + H(+). Its pathway is cell wall biogenesis; peptidoglycan biosynthesis. Functionally, cell wall formation. This Acinetobacter baumannii (strain ACICU) protein is D-alanine--D-alanine ligase.